Reading from the N-terminus, the 290-residue chain is Aquaporin-3 (290 aa).

The Cytoplasmic segment spans residues 1–24 (MGRQKELVTRCGEMLHIRYRLLRQ). The chain crosses the membrane as a helical span at residues 25–42 (ALAECLGTLILVMFGCGS). The Extracellular portion of the chain corresponds to 43 to 56 (VAQVVLSRGTHGGF). A helical transmembrane segment spans residues 57-74 (LTINLAFGFAVTLGILVA). Topologically, residues 75–78 (GQVS) are cytoplasmic. Residues 79-92 (GAHLNPAVTFAMCF) constitute an intramembrane region (discontinuously helical). An NPA 1 motif is present at residues 83–85 (NPA). The Cytoplasmic portion of the chain corresponds to 93–100 (LAREPWIK). The helical transmembrane segment at 101 to 121 (LPVYTLAQTLGAFLGAGIIFG) threads the bilayer. At 122-159 (LYYDAIWAFANNQLIVSGPNGTAGIFATYPSGHLDMVN) the chain is on the extracellular side. N141 carries N-linked (GlcNAc...) asparagine glycosylation. The helical transmembrane segment at 160 to 177 (GFFDQFIGTASLIVCVLA) threads the bilayer. Residues 178 to 189 (IVDPNNNPVPRG) lie on the Cytoplasmic side of the membrane. The helical transmembrane segment at 190–206 (LEAFTVGLVVLVIGTSM) threads the bilayer. Topologically, residues 207–210 (GFNS) are extracellular. Residues 211–224 (GYAVNPARDFGPRL) constitute an intramembrane region (discontinuously helical). Positions 215–217 (NPA) match the NPA 2 motif. Topologically, residues 225–242 (FTAIAGWGSEVFTTGRHW) are extracellular. The chain crosses the membrane as a helical span at residues 243 to 264 (WWVPIASPLLGSIAGVFVYQLM). The Cytoplasmic portion of the chain corresponds to 265 to 290 (IGCHLEPPPPSTDEENVKLSQVKHKE).

This sequence belongs to the MIP/aquaporin (TC 1.A.8) family. In terms of assembly, homotetramer; each monomer provides an independent glycerol/water pore. Could also exist in other oligomeric states. In terms of tissue distribution, highly expressed in stomach and spleen, with lower expression in kidney and lung.

It is found in the cell membrane. Its subcellular location is the basolateral cell membrane. It carries out the reaction glycerol(in) = glycerol(out). The catalysed reaction is H2O(in) = H2O(out). It catalyses the reaction urea(in) = urea(out). The enzyme catalyses H2O2(out) = H2O2(in). Aquaglyceroporins form homotetrameric transmembrane channels, with each monomer independently mediating glycerol and water transport across the plasma membrane along their osmotic gradient. Could also be permeable to urea. Also participates in cell permeability to H2O2 and H2O2-mediated signaling. In skin, transports glycerol to the epidermis and stratum corneum, where it maintains hydration, elasticity, and supports lipid biosynthesis for barrier repair. In kidney, contributes to the reabsorption of water, helping the body maintain proper fluid balance. The sequence is that of Aquaporin-3 from Sus scrofa (Pig).